The sequence spans 432 residues: Transcriptional adapter 3 (432 aa).

Residue K21 forms a Glycyl lysine isopeptide (Lys-Gly) (interchain with G-Cter in SUMO2) linkage. The stretch at 40–69 forms a coiled coil; that stretch reads IEELDTLQLELETLLSSASRRLRVLEAETQ. The disordered stretch occupies residues 87–127; that stretch reads ARDHELGAPPKHGKPKKQKLEGKTGHGPGPGPGRPKSKNVQ. A Glycyl lysine isopeptide (Lys-Gly) (interchain with G-Cter in SUMO2) cross-link involves residue K129. The segment at 272 to 319 is disordered; that stretch reads NIISPMEDSPIPDMSGKESGADGASTSPRNQNKPFSVPHTKSLESRIK. S280 and S298 each carry phosphoserine. Positions 295–305 are enriched in polar residues; sequence ASTSPRNQNKP. Positions 367–407 form a coiled coil; the sequence is LLRLAKEEVSRQELRQRVRMADNEVMDAFRKIMAARQKKRT. At K418 the chain carries N6-acetyllysine.

The protein belongs to the NGG1 family. The PCAF complex is composed of a number of TBP-associated factors (TAFS), such as TAF5, TAF5L, TAF6, TAF6L, TAF9, TAF10 and TAF12, PCAF, and also PCAF-associated factors (PAFs), such as TADA2L/ADA2, TADA3L/ADA3 and SPT3. Interacts directly with TADA2L and PCAF and also with the high-risk HPV oncoprotein E6. Component of the STAGA transcription coactivator-HAT complex, at least composed of SUPT3H, GCN5L2, TAF5L, TAF6L, SUPT7L, TADA3L, TAD1L, TAF10, TAF12, TRRAP and TAF9. Component of the TFTC-HAT complex. Component of the ADA2A-containing complex (ATAC), composed of KAT14, KAT2A, TADA2L, TADA3L, ZZ3, MBIP, WDR5, YEATS2, CCDC101 and DR1.

The protein localises to the nucleus. In terms of biological role, functions as a component of the PCAF complex. The PCAF complex is capable of efficiently acetylating histones in a nucleosomal context. The PCAF complex could be considered as the human version of the yeast SAGA complex. Also known as a coactivator for p53/TP53-dependent transcriptional activation. Component of the ATAC complex, a complex with histone acetyltransferase activity on histones H3 and H4. This Rattus norvegicus (Rat) protein is Transcriptional adapter 3 (Tada3).